The sequence spans 632 residues: Acyl-coenzyme A oxidase-like protein (632 aa).

Residue 376–381 (TGGMGY) participates in FAD binding.

Belongs to the acyl-CoA oxidase family. FAD serves as cofactor.

This chain is Acyl-coenzyme A oxidase-like protein (Acoxl), found in Mus musculus (Mouse).